Here is a 396-residue protein sequence, read N- to C-terminus: Calcium-binding and spermatid-specific protein 1 (396 aa).

A disordered region spans residues 1 to 21 (MAEDGLPKIYSHPPTESSKTP). Residue S274 is modified to Phosphoserine. Residues 276–296 (EKDKDNQEDTLLTDEESPEGA) are disordered. Positions 283 to 293 (EDTLLTDEESP) are enriched in acidic residues. T288 is modified (phosphothreonine; by CK2). A phosphoserine mark is found at S320 and S377. Positions 336-396 (EDSSTEEELS…LKEEPDEFMI (61 aa)) are disordered.

The protein localises to the cytoplasm. It is found in the mitochondrion inner membrane. Its subcellular location is the cell projection. The protein resides in the cilium. It localises to the flagellum. The protein localises to the cytoplasmic vesicle. It is found in the secretory vesicle. Its subcellular location is the acrosome. In terms of biological role, calcium-binding protein. Essential for maintaining the structural integrity of the sperm flagella. The polypeptide is Calcium-binding and spermatid-specific protein 1 (CABS1) (Macaca fascicularis (Crab-eating macaque)).